The following is a 216-amino-acid chain: uncharacterized protein (216 aa).

Residues 1 to 21 form a helical membrane-spanning segment; it reads MTIVHFVGSLFFFFFFSYIFF.

Its subcellular location is the membrane. This is an uncharacterized protein from Saccharomyces cerevisiae (strain ATCC 204508 / S288c) (Baker's yeast).